The sequence spans 313 residues: tRNA dimethylallyltransferase (313 aa).

ATP is bound at residue G11 to T18. T13–T18 is a binding site for substrate. Interaction with substrate tRNA stretches follow at residues D36–L39, Q160–R164, and R241–R246.

The protein belongs to the IPP transferase family. As to quaternary structure, monomer. Mg(2+) serves as cofactor.

It catalyses the reaction adenosine(37) in tRNA + dimethylallyl diphosphate = N(6)-dimethylallyladenosine(37) in tRNA + diphosphate. In terms of biological role, catalyzes the transfer of a dimethylallyl group onto the adenine at position 37 in tRNAs that read codons beginning with uridine, leading to the formation of N6-(dimethylallyl)adenosine (i(6)A). The sequence is that of tRNA dimethylallyltransferase from Haemophilus ducreyi (strain 35000HP / ATCC 700724).